A 657-amino-acid chain; its full sequence is Transmembrane protein 232 (657 aa).

2 helical membrane passes run 168–188 (IGYLVFLRLFIFFLHGHLESF) and 353–373 (WAWNVVYIYTVILAEICLYAA).

The protein resides in the membrane. In terms of biological role, plays a critical role for male fertility and sperm motility by regulating sperm cytoplasm removal and maintaining axoneme integrity. This chain is Transmembrane protein 232 (TMEM232), found in Homo sapiens (Human).